The chain runs to 339 residues: Anthranilate phosphoribosyltransferase (339 aa).

5-phospho-alpha-D-ribose 1-diphosphate-binding positions include Gly79, 82–83, Ser87, 89–92, 107–115, and Ser119; these read GD, NIST, and KHGNRSISS. Gly79 is an anthranilate binding site. Ser91 is a Mg(2+) binding site. Asn110 contacts anthranilate. Arg165 serves as a coordination point for anthranilate. Mg(2+) is bound by residues Asp224 and Glu225.

It belongs to the anthranilate phosphoribosyltransferase family. As to quaternary structure, homodimer. Requires Mg(2+) as cofactor.

The catalysed reaction is N-(5-phospho-beta-D-ribosyl)anthranilate + diphosphate = 5-phospho-alpha-D-ribose 1-diphosphate + anthranilate. The protein operates within amino-acid biosynthesis; L-tryptophan biosynthesis; L-tryptophan from chorismate: step 2/5. Functionally, catalyzes the transfer of the phosphoribosyl group of 5-phosphorylribose-1-pyrophosphate (PRPP) to anthranilate to yield N-(5'-phosphoribosyl)-anthranilate (PRA). The sequence is that of Anthranilate phosphoribosyltransferase from Listeria innocua serovar 6a (strain ATCC BAA-680 / CLIP 11262).